The primary structure comprises 113 residues: MNRSDIFEKLANLEANINQINSDMGNLKKLTVEVIEENVALQIENENLKTLIDKEEKSKAVENGKKLPKKQPLRSKDNLAMLYKEGFHICNGELFGKHRKGDDCLFCLEVLSE.

Zn(2+)-binding residues include H88, C90, C104, and C107.

This sequence belongs to the YabA family. In terms of assembly, homotetramer. Interacts with both DnaA and DnaN, acting as a bridge between these two proteins. Zn(2+) is required as a cofactor.

The protein resides in the cytoplasm. The protein localises to the nucleoid. Its function is as follows. Involved in control of chromosome replication initiation. Inhibits the cooperative binding of DnaA to the oriC region, thus negatively regulating initiation of chromosome replication. Inhibits the ability of DnaA-ATP to form a helix on DNA; does not disassemble preformed DnaA-DNA helices. Decreases the residence time of DnaA on the chromosome at its binding sites (oriC, replication forks and promoter-binding sites). Tethers DnaA to the replication machinery via the DNA polymerase beta sliding clamp subunit (dnaN). Associates with oriC and other DnaA targets on the chromosome in a DnaA-dependent manner. The chain is Replication initiation control protein YabA from Staphylococcus saprophyticus subsp. saprophyticus (strain ATCC 15305 / DSM 20229 / NCIMB 8711 / NCTC 7292 / S-41).